The primary structure comprises 61 residues: Small ribosomal subunit protein uS14 (61 aa).

Residues Cys24, Cys27, Cys40, and Cys43 each coordinate Zn(2+).

The protein belongs to the universal ribosomal protein uS14 family. Zinc-binding uS14 subfamily. In terms of assembly, part of the 30S ribosomal subunit. Contacts proteins S3 and S10. The cofactor is Zn(2+).

Binds 16S rRNA, required for the assembly of 30S particles and may also be responsible for determining the conformation of the 16S rRNA at the A site. The protein is Small ribosomal subunit protein uS14 of Acetivibrio thermocellus (strain ATCC 27405 / DSM 1237 / JCM 9322 / NBRC 103400 / NCIMB 10682 / NRRL B-4536 / VPI 7372) (Clostridium thermocellum).